The primary structure comprises 480 residues: Zinc finger protein ztf-16 (480 aa).

The segment at 5 to 27 (NACTECGFTTTVFSEFQGHIEKH) adopts a C2H2-type 1 zinc-finger fold. Residues 25-75 (EKHENEHSRSSSGEMSNSQTIEWGDGIQSSTPSPRSTPPSDPTPSPDSDEH) are disordered. Residues 34–45 (SSSGEMSNSQTI) show a composition bias toward polar residues. Residues 59 to 69 (RSTPPSDPTPS) show a composition bias toward pro residues. 5 consecutive C2H2-type zinc fingers follow at residues 103-125 (HVCP…LEAH), 133-155 (YQCD…RMRH), 161-183 (YECR…SMTH), 190-215 (FDCP…EETH), and 223-246 (ASCK…QTRH). 3 disordered regions span residues 243-275 (QTRH…MDPA), 290-311 (EFSP…DKIP), and 376-417 (TSSS…KEDE). Positions 244–259 (TRHDDSESSPKKENTP) are enriched in basic and acidic residues. Low complexity-rich tracts occupy residues 292–305 (SPPN…STSS) and 376–403 (TSSS…SLSL). The span at 404–413 (TEKEKSPTPE) shows a compositional bias: basic and acidic residues. 2 C2H2-type zinc fingers span residues 420–442 (VECC…KSLH) and 448–472 (FKCA…FADH).

The protein belongs to the Ikaros C2H2-type zinc-finger protein family. Expressed in the somatic gonad, hypodermis and cells in the head and tail. Expressed in amphid and phasmid sheath glia, amphid and phasmid socket glia, and in neurons in the head.

The protein localises to the nucleus. Positively regulates the expression of ver-1 in the amphid sheath glia of amphid sensory neurons. Together with ehn-3, plays a role in somatic gonad development and is required for proper gonadal primordium assembly and somatic gonad precursor cell morphology. In Caenorhabditis elegans, this protein is Zinc finger protein ztf-16.